We begin with the raw amino-acid sequence, 317 residues long: Vacuolar arginine/histidine antiporter YPQ2 (317 aa).

Topologically, residues 1–13 (MSCSNGIWPTVSN) are vacuolar. The PQ-loop 1 domain maps to 8–71 (WPTVSNLCGS…AKLTGQLLFQ (64 aa)). The chain crosses the membrane as a helical span at residues 14 to 34 (LCGSLSFFTSVISLFPQIIET). Residues 35 to 39 (YRDKS) are Cytoplasmic-facing. The helical transmembrane segment at 40–62 (VDGLSPYFLLAWLCGDITSLIGA) threads the bilayer. At 63–71 (KLTGQLLFQ) the chain is on the vacuolar side. Residues 72–94 (ILLAIYFLLNDSFVCGQYYYYGV) form a helical membrane-spanning segment. At 95 to 143 (LHENKLATVGHEPKPLLPELVENGELLREEEDMIQGGSSAESPRSSRRR) the chain is on the cytoplasmic side. S136 is modified (phosphoserine). A helical membrane pass occupies residues 144–164 (SAITAALAIAHTISTASAYPL). At 165 to 184 (NVGSTQSQVGPPGDGKNSQL) the chain is on the vacuolar side. A helical transmembrane segment spans residues 185–205 (GTILSWIGASFYVGARIPQLI). One can recognise a PQ-loop 2 domain in the interval 185-247 (GTILSWIGAS…SCRFLDNQNK (63 aa)). The Cytoplasmic segment spans residues 206–215 (KNYNRKSTDG). A helical membrane pass occupies residues 216 to 236 (LSPFLFATTLLCNITYNLSIF). Residues 237-249 (TSCRFLDNQNKRE) are Vacuolar-facing. A helical transmembrane segment spans residues 250–270 (FIVNELPFIFGSAGTIAFDLI). Residues 271 to 317 (YFYQYYILYATDMQLRELERELYSPEEDSAAQLVTERTSLLSGETQT) lie on the Cytoplasmic side of the membrane.

It belongs to the laat-1 family.

Its subcellular location is the vacuole membrane. The catalysed reaction is L-histidine(out) + L-arginine(in) = L-histidine(in) + L-arginine(out). Amino acid transporter that moves arginine across the vacuolar membrane. Active during nitrogen starvation when it exports stored vacuolar arginine to the cytosol, for use as a nitrogen source. Has been shown to function as an arginine/histidine antiporter when substrate is present on both sides of the membrane, but may also function as a uniporter. The protein is Vacuolar arginine/histidine antiporter YPQ2 (YPQ2) of Saccharomyces cerevisiae (strain ATCC 204508 / S288c) (Baker's yeast).